Reading from the N-terminus, the 302-residue chain is Methionyl-tRNA formyltransferase (302 aa).

Position 107-110 (107-110 (SLLP)) interacts with (6S)-5,6,7,8-tetrahydrofolate.

It belongs to the Fmt family.

The enzyme catalyses L-methionyl-tRNA(fMet) + (6R)-10-formyltetrahydrofolate = N-formyl-L-methionyl-tRNA(fMet) + (6S)-5,6,7,8-tetrahydrofolate + H(+). Functionally, attaches a formyl group to the free amino group of methionyl-tRNA(fMet). The formyl group appears to play a dual role in the initiator identity of N-formylmethionyl-tRNA by promoting its recognition by IF2 and preventing the misappropriation of this tRNA by the elongation apparatus. The sequence is that of Methionyl-tRNA formyltransferase from Leifsonia xyli subsp. xyli (strain CTCB07).